We begin with the raw amino-acid sequence, 556 residues long: Urocanate hydratase (556 aa).

NAD(+) contacts are provided by residues 53–54 (GG), glutamine 131, 177–179 (GMG), glutamate 197, 243–244 (NA), 264–268 (QTSAH), 274–275 (YL), and tyrosine 323. The active site involves cysteine 411. Position 493 (glycine 493) interacts with NAD(+).

Belongs to the urocanase family. Requires NAD(+) as cofactor.

It is found in the cytoplasm. It carries out the reaction 4-imidazolone-5-propanoate = trans-urocanate + H2O. Its pathway is amino-acid degradation; L-histidine degradation into L-glutamate; N-formimidoyl-L-glutamate from L-histidine: step 2/3. Functionally, catalyzes the conversion of urocanate to 4-imidazolone-5-propionate. This Pseudomonas fluorescens (strain SBW25) protein is Urocanate hydratase.